A 481-amino-acid polypeptide reads, in one-letter code: MDSLFIIISLVIVILTTIFILSNLLSKKTILLPGKTGLPLIGESIDYFNKLRTGINEKFVMERKLKYASDVFKTSILGENMAFLTGPEGNKFLFSNENKLVQVWWPSSVDSIIKKSHNKSAQAESAKVRVLLPPFLRAHAIKHYVSTMDSELRQHVADFWVGRDEVEVCPLVRKYTFALAVRLFLSVRDPGELEALARPFEEAAGGIIAIPINFPGTRFNRGIKASQRIRKVIGGIIEQRRKDLSEGKATPSQDLLSHMIVEVDRRNAENPDIAPATDSDISSDILGLLIGGYDTINTTIVFVMMTLVEYPDVYDQVLKEQREIAASKAPGELLNWDDLGKMKYSWNVACEVLRLRPPTVGAFRVAKTDFNYGGYTIPKGWKLHYIPHFTQKNPDYFPNPEKFDPSRFAGDGPAPYTFVPFGGGPRMCPGNEYARAEILVFMHNIILRYNWEKLIPNEKVVIDPLPRPSQGLPIRLIPHKA.

Residues 4–24 (LFIIISLVIVILTTIFILSNL) traverse the membrane as a helical segment. A heme-binding site is contributed by Cys428.

The protein belongs to the cytochrome P450 family. Heme serves as cofactor. In terms of tissue distribution, highly expressed in roots. Expressed at very low levels in leaves and petals.

Its subcellular location is the membrane. The enzyme catalyses beta-amyrin + reduced [NADPH--hemoprotein reductase] + O2 = maniladiol + oxidized [NADPH--hemoprotein reductase] + H2O + H(+). It carries out the reaction oleanolate + reduced [NADPH--hemoprotein reductase] + O2 = cochalate + oxidized [NADPH--hemoprotein reductase] + H2O + H(+). Functionally, involved in triterpenoid saponin biosynthesis in roots. Catalyzes the hydroxylation of beta-amyrin at the C-16 beta position to form maniladiol. Is also able to oxidize oleanolat to cochalate. Has weak activity catalyzing the three-step oxidation at C-28 of beta-amyrin to form oleanolate. This Platycodon grandiflorus (Balloon flower) protein is Beta-amyrin 16-beta-monooxygenase.